The sequence spans 433 residues: Enolase (433 aa).

Residue Q167 participates in (2R)-2-phosphoglycerate binding. Catalysis depends on E209, which acts as the Proton donor. D246, E291, and D318 together coordinate Mg(2+). (2R)-2-phosphoglycerate is bound by residues K343, R372, S373, and K394. The Proton acceptor role is filled by K343.

It belongs to the enolase family. As to quaternary structure, component of the RNA degradosome, a multiprotein complex involved in RNA processing and mRNA degradation. The cofactor is Mg(2+).

The protein localises to the cytoplasm. It localises to the secreted. The protein resides in the cell surface. It carries out the reaction (2R)-2-phosphoglycerate = phosphoenolpyruvate + H2O. The protein operates within carbohydrate degradation; glycolysis; pyruvate from D-glyceraldehyde 3-phosphate: step 4/5. Catalyzes the reversible conversion of 2-phosphoglycerate (2-PG) into phosphoenolpyruvate (PEP). It is essential for the degradation of carbohydrates via glycolysis. This Vibrio vulnificus (strain YJ016) protein is Enolase.